A 156-amino-acid chain; its full sequence is ATP synthase subunit b (156 aa).

A helical transmembrane segment spans residues 11 to 31 (AIAFVLFVMFCMKFVWPPIMA).

The protein belongs to the ATPase B chain family. F-type ATPases have 2 components, F(1) - the catalytic core - and F(0) - the membrane proton channel. F(1) has five subunits: alpha(3), beta(3), gamma(1), delta(1), epsilon(1). F(0) has three main subunits: a(1), b(2) and c(10-14). The alpha and beta chains form an alternating ring which encloses part of the gamma chain. F(1) is attached to F(0) by a central stalk formed by the gamma and epsilon chains, while a peripheral stalk is formed by the delta and b chains.

It is found in the cell inner membrane. In terms of biological role, f(1)F(0) ATP synthase produces ATP from ADP in the presence of a proton or sodium gradient. F-type ATPases consist of two structural domains, F(1) containing the extramembraneous catalytic core and F(0) containing the membrane proton channel, linked together by a central stalk and a peripheral stalk. During catalysis, ATP synthesis in the catalytic domain of F(1) is coupled via a rotary mechanism of the central stalk subunits to proton translocation. Its function is as follows. Component of the F(0) channel, it forms part of the peripheral stalk, linking F(1) to F(0). The protein is ATP synthase subunit b of Photorhabdus laumondii subsp. laumondii (strain DSM 15139 / CIP 105565 / TT01) (Photorhabdus luminescens subsp. laumondii).